Consider the following 254-residue polypeptide: Cell wall biogenesis protein NCW2 (254 aa).

Residues 1-17 (MKACSILFTTLITLAAA) form the signal peptide. Disordered regions lie at residues 19-57 (KDSG…SAST), 111-143 (TSTA…DGPV), and 167-191 (ATTD…SSTK). The segment covering 27 to 42 (QNSEDSSQKESSNSQE) has biased composition (low complexity). A compositionally biased stretch (polar residues) spans 43 to 57 (ITPTTTKEAQESAST). Positions 111–139 (TSTASVQPTGETSSGITNSASSSTTSTST) are enriched in low complexity. Asparagine 229 carries N-linked (GlcNAc...) asparagine glycosylation. Asparagine 232 carries GPI-anchor amidated asparagine lipidation. The propeptide at 233 to 254 (GAFAGTHIAYGAGAFAVGALLL) is removed in mature form.

The protein resides in the cell membrane. In terms of biological role, cell wall biogenesis protein that participates in the organization of the beta-glucan assembly. Involved in the mechanism responsible for cell tolerance to polyhexamethylene biguanide (PHMB), an antifungal agent. The chain is Cell wall biogenesis protein NCW2 from Saccharomyces cerevisiae (strain ATCC 204508 / S288c) (Baker's yeast).